Here is a 261-residue protein sequence, read N- to C-terminus: Flap endonuclease Xni (261 aa).

Residue D105 participates in Mg(2+) binding. Residues 164–256 (SQFLDLMALA…DFRVNSPTKA (93 aa)) enclose the 5'-3' exonuclease domain. Positions 172, 173, 181, 183, and 186 each coordinate K(+). The interaction with DNA stretch occupies residues 185-190 (GIGPKS).

It belongs to the Xni family. Mg(2+) serves as cofactor. K(+) is required as a cofactor.

Its function is as follows. Has flap endonuclease activity. During DNA replication, flap endonucleases cleave the 5'-overhanging flap structure that is generated by displacement synthesis when DNA polymerase encounters the 5'-end of a downstream Okazaki fragment. The polypeptide is Flap endonuclease Xni (Shewanella oneidensis (strain ATCC 700550 / JCM 31522 / CIP 106686 / LMG 19005 / NCIMB 14063 / MR-1)).